The sequence spans 203 residues: MTKYHFTSKDFNVFNVEGLEPRMVALIETTRPKLEALGEYFSSYLSQHTDETFYPHVAKHLRRKTNPPNDTWVAFSTNKRGYKMLPHFQIGLFDDHAFVLFGIIYESPEKERMAAKWQQQVNDILALDRDFIIKSDHMKKTYETVHSLDEDALKRYIDRLINVKKGELLFGKVFFPDDAALMSDKKFLAAVEDTFFKLLPLYI.

It belongs to the UPF0637 family.

In Macrococcus caseolyticus (strain JCSC5402) (Macrococcoides caseolyticum), this protein is UPF0637 protein MCCL_0722.